We begin with the raw amino-acid sequence, 1344 residues long: Myb-binding protein 1A (1344 aa).

Residues 1–24 (MAEMKSPTKAEPATPAEAAQSDRH) form a disordered region. Ala-2 carries the N-acetylalanine modification. Positions 2–580 (AEMKSPTKAE…WDQMMSTLKE (579 aa)) are interaction with MYB. Low complexity predominate over residues 7-19 (PTKAEPATPAEAA). 2 positions are modified to N6-acetyllysine: Lys-69 and Lys-156. 2 consecutive short sequence motifs (nuclear export signal) follow at residues 238–256 (SEDN…ANSV) and 261–279 (KLPN…ESRF). Disordered stretches follow at residues 710–751 (DEKQ…DKDV) and 1146–1344 (QRPK…VQTP). Residues 732–747 (SDMDSEDGEESEEEDR) show a composition bias toward acidic residues. Over residues 1148–1159 (PKSEKKNAKDIP) the composition is skewed to basic and acidic residues. A Glycyl lysine isopeptide (Lys-Gly) (interchain with G-Cter in SUMO2) cross-link involves residue Lys-1149. Positions 1152 to 1344 (KKNAKDIPSD…RVASRRVQTP (193 aa)) are required for nuclear and nucleolar localization. 2 positions are modified to phosphoserine: Ser-1160 and Ser-1164. The segment covering 1168–1185 (TKRKKKGFLPETKKRKKL) has biased composition (basic residues). Position 1187 is a phosphoserine (Ser-1187). Positions 1188 to 1202 (EGTTPEKNAASQQDA) are enriched in polar residues. Thr-1191 is subject to Phosphothreonine. Ser-1219 and Ser-1244 each carry phosphoserine. The segment covering 1249 to 1258 (NPTLSPSTPA) has biased composition (polar residues). Thr-1251 is modified (phosphothreonine). Ser-1253 is modified (phosphoserine). Phosphothreonine occurs at positions 1256 and 1277. A phosphoserine mark is found at Ser-1280, Ser-1303, and Ser-1318. Positions 1317 to 1329 (LSLVSRSPSLLQS) are enriched in low complexity. A Citrulline modification is found at Arg-1322. Phosphoserine is present on residues Ser-1323, Ser-1325, and Ser-1329.

The protein belongs to the MYBBP1A family. As to quaternary structure, component of the B-WICH complex, at least composed of SMARCA5/SNF2H, BAZ1B/WSTF, SF3B1, DEK, MYO1C, ERCC6, MYBBP1A and DDX21. Binds to and represses JUN and MYB via the leucine zipper regions present in these proteins. Also binds to and represses PPARGC1A: this interaction is abrogated when PPARGC1A is phosphorylated by MAPK1/ERK. Binds to and stimulates transcription by AHR. Binds to KPNA2. Interacts with CLOCK and CRY1. Post-translationally, citrullinated by PADI4. As to expression, ubiquitously expressed.

The protein localises to the nucleus. It is found in the nucleolus. Its subcellular location is the cytoplasm. May activate or repress transcription via interactions with sequence specific DNA-binding proteins. Repression may be mediated at least in part by histone deacetylase activity (HDAC activity). Acts as a corepressor and in concert with CRY1, represses the transcription of the core circadian clock component PER2. Preferentially binds to dimethylated histone H3 'Lys-9' (H3K9me2) on the PER2 promoter. Has a role in rRNA biogenesis together with PWP1. The polypeptide is Myb-binding protein 1A (Mybbp1a) (Mus musculus (Mouse)).